The sequence spans 151 residues: Proline-rich acidic protein 1 (151 aa).

An N-terminal signal peptide occupies residues 1–20 (MRRLLLVTSLVVVLLWEAGA). Residues 71 to 151 (LTTEEKPRGQ…EDQDHIYHPQ (81 aa)) are disordered.

Interacts with isoform 1 and isoform 3 of MAD1L1. Interacts with MTTP. Highly expressed in the intestinal epithelial cells (at protein level). Abundantly expressed in the epithelial cells of the liver, kidney and cervix. Significantly down-regulated in hepatocellular carcinoma and right colon adenocarcinoma compared with the respective adjacent normal tissues. Expressed in epididymis (at protein level).

It is found in the secreted. Its subcellular location is the endoplasmic reticulum. Its function is as follows. Lipid-binding protein which promotes lipid absorption by facilitating MTTP-mediated lipid transfer (mainly triglycerides and phospholipids) and MTTP-mediated apoB lipoprotein assembly and secretion. Protects the gastrointestinal epithelium from irradiation-induced apoptosis. May play an important role in maintaining normal growth homeostasis in epithelial cells. Involved in p53/TP53-dependent cell survival after DNA damage. May down-regulate the expression of MAD1L1 and exert a suppressive role in mitotic spindle assembly checkpoint in hepatocellular carcinomas. This is Proline-rich acidic protein 1 (PRAP1) from Homo sapiens (Human).